The chain runs to 259 residues: uncharacterized protein (259 aa).

The signal sequence occupies residues 1–28; that stretch reads MNIKRRLKYLTSCLLVSAFFWINSSAWA. 2 consecutive transmembrane segments (helical) span residues 32 to 52 and 191 to 211; these read EIPPSAPWVIYLGGFGGIYVA and WGFLVGFGLGYDFCPWFGIFT.

It is found in the cell membrane. This is an uncharacterized protein from Coxiella burnetii (strain RSA 493 / Nine Mile phase I).